Reading from the N-terminus, the 892-residue chain is E3 ubiquitin ligase PQT3-like (892 aa).

Residues 3 to 76 (IYYKFKSARD…NTSVLIRRVP (74 aa)) enclose the DWNN domain. The segment at 210–224 (CHRCNIPGHFIQHCP) adopts a CCHC-type zinc-finger fold. Ser-285 bears the Phosphoserine mark. Residues 295 to 333 (CPLCKEVMKDAALTSKCCYKSFCDKCIRDHIISKSMCVC) form an RING-type; degenerate zinc finger. Disordered regions lie at residues 375-408 (DLES…NNND), 459-493 (TQAP…MQWN), and 623-892 (MLRK…RSRA). Ser-404 is modified (phosphoserine). The segment covering 623–644 (MLRKRENERRPEGGKMFRDGEN) has biased composition (basic and acidic residues). A compositionally biased stretch (polar residues) spans 647–666 (MMMNNGTSASASSINPNKSR). A compositionally biased stretch (basic and acidic residues) spans 674–692 (HDYDRRRRPEKRLSPEHPP). Residues 693 to 700 (TRKNISPS) carry the Nuclear localization signal motif. The span at 708–745 (ERYPDERDRQRDRERSRHQDVDREHDRTRDRRDEDRSR) shows a compositional bias: basic and acidic residues. Positions 810–832 (SSSSTSVTDPSASASAAAAVGTS) are enriched in low complexity. Ser-866 is modified (phosphoserine). The span at 875–892 (SEDKLRYSKRGKGERSRA) shows a compositional bias: basic and acidic residues.

It localises to the nucleus. The enzyme catalyses S-ubiquitinyl-[E2 ubiquitin-conjugating enzyme]-L-cysteine + [acceptor protein]-L-lysine = [E2 ubiquitin-conjugating enzyme]-L-cysteine + N(6)-ubiquitinyl-[acceptor protein]-L-lysine.. The protein is E3 ubiquitin ligase PQT3-like of Arabidopsis thaliana (Mouse-ear cress).